A 346-amino-acid polypeptide reads, in one-letter code: Partitioning defective 6 homolog alpha (346 aa).

An interaction with PRKCI and PRKCZ region spans residues 1–116 (MARPQRTPAR…SNSLQRRKKG (116 aa)). The 81-residue stretch at 15 to 95 (IVEVKSKFDA…PPLRLLVQKR (81 aa)) folds into the PB1 domain. Residues 126–253 (RTRPPLLISL…VTVKPANQRN (128 aa)) are interaction with PARD3 and CDC42. The 18-residue stretch at 133 to 150 (ISLPQDFRQVSSVIDVDL) folds into the Pseudo-CRIB domain. Residues 157-250 (RVRLHKHGSD…NLIVTVKPAN (94 aa)) form the PDZ domain. Positions 257–346 (RGASGRLTGP…IRGDGSGFSL (90 aa)) are disordered. Residues S278 and S345 each carry the phosphoserine modification.

This sequence belongs to the PAR6 family. Interacts with MAP2K5. Interacts with PARD3. Interacts with GTP-bound forms of CDC42, RHOQ/TC10 and RAC1. Interacts with the N-terminal part of PRKCI and PRKCZ. Part of a complex with PARD3, CDC42 or RAC1 and PRKCI or PRKCZ. Part of a complex with LLGL1 and PRKCI. Interacts with human T-cell leukemia virus type I TAX protein. Interacts with PALS1 and CRB3. Interacts with TGFBR1; involved in TGF-beta induced epithelial to mesenchymal transition. Interacts with ECT2 ('Thr-359' phosphorylated form) and PRKCI. Interacts with DCTN1 and PCM1. Phosphorylated by the TGF-beta receptor. Post-translationally, ubiquitinated by the SCF(FBXO31) complex, leading to its proteasomal degradation. In terms of tissue distribution, expressed in pancreas, skeletal muscle, brain and heart. Weakly expressed in kidney and placenta.

Its subcellular location is the cytoplasm. The protein resides in the cell membrane. It is found in the cell projection. The protein localises to the ruffle. It localises to the cell junction. Its subcellular location is the tight junction. The protein resides in the cytoskeleton. It is found in the microtubule organizing center. The protein localises to the centrosome. It localises to the centriolar satellite. In terms of biological role, adapter protein involved in asymmetrical cell division and cell polarization processes. Probably involved in the formation of epithelial tight junctions. Association with PARD3 may prevent the interaction of PARD3 with F11R/JAM1, thereby preventing tight junction assembly. The PARD6-PARD3 complex links GTP-bound Rho small GTPases to atypical protein kinase C proteins. Regulates centrosome organization and function. Essential for the centrosomal recruitment of key proteins that control centrosomal microtubule organization. The chain is Partitioning defective 6 homolog alpha (PARD6A) from Homo sapiens (Human).